Reading from the N-terminus, the 405-residue chain is L-rhamnonate dehydratase (405 aa).

Residues His33 and Arg59 each coordinate substrate. Asp226, Glu252, and Glu280 together coordinate Mg(2+). Residue His329 is the Proton acceptor of the active site. Glu349 contacts substrate.

The protein belongs to the mandelate racemase/muconate lactonizing enzyme family. RhamD subfamily. Homooctamer; tetramer of dimers. The cofactor is Mg(2+).

It carries out the reaction L-rhamnonate = 2-dehydro-3-deoxy-L-rhamnonate + H2O. Its function is as follows. Catalyzes the dehydration of L-rhamnonate to 2-keto-3-deoxy-L-rhamnonate (KDR). This is L-rhamnonate dehydratase from Shigella boydii serotype 4 (strain Sb227).